A 3122-amino-acid chain; its full sequence is MATMQAASCPEERGRRARPDPEAGDPSPPVLLLSHFCGVPFLCFGDVRVGTSRTRSLVLHNPHEEPLQVELSLLRAAGQGFSVAPNRCELKPKEKLTISVTWTPLREGGVREIVTFLVNDFLKHQAILLGNAEEPKKKKRSLWNTSKKIPASSKHTKRTSKNQHFNESFTISQKDRIRSPLQPCENLAMSECSSPTENKVPTPSISPIRECQSETCLPLFLRESTAYSSLHESENTQNLKVQDASISQTFDFNEEVANETFINPISVCHQSEGDRKLTLAPNCSSPLNSTQTQIHFLSPDSFVNNRYTSDNDLKSMKNVLSDTFRKDPAESVCLESQTVHEVCQTILSPDSFLNDNYGLKKGLNFKSVNPVLSPTQFVKDSMGHVGQQTGKSNEASQDWRINEGLAYTPECQHAQTPSSRSEKQNPVEVKPHTYDFTKQKPKISEFQDAFCHQSKQPHKRRPILSATVTKRKPTNAREKLPEINKPDAKRCLEGLVGERGKEVGSLREKGFHSSLPVVEPGVSKALSYRDEVTPATVVVARKRKSHGTVGDANGKVAAEEWMDMCEVKRIHFSPLESTPSTVARTTKKEGHTSKRISSLERSGLKKKMDSSILKTPLSKTKKKRRSIVAVAQSHLTFIKPLKAAIPRHPMPFAAKNMFYDERWKEKQEQGFTWWLNYILTPDDFTVKTNVSKVNAASLVLGAESQHKISVPKAPTKEEVSLRAYTASCRLNRLRRTACSLFTSEKMVKAIKKVEIEIEVGRLLVRKDRHLWKDIGQRQKVLNWLLSYNPLWLRIGLETVFGELIPLADNSDVTGLAMFILNRLLWNPDIAAEYRHPTVPLLFRDGHEAALSKFTLKKLLLLICFLDHAKISRLIDHDPCLFCKDAEFKASKELLLAFSRDFLSGEGDLSRHLSFLGLPVSHVQTPLDEFDFAVTNLAVDLQCGVRLVRTVELLTQNWNLSDKLRIPAISRVQKMHNVDLVLQVLKSRGVPLTDEHGSAISSKDVVDRHREKTLGLLWKIALAFQVDISLNLDQLKEEIDFLKHTHSIKRAMSALTCPSQAITNKQRDKRISGNFERYGDSVQLLMDWVNAVCAFYNKKVENFTVSFSDGRILCYLIHHYHPCYVPFDAICQRTSQSVACAQTGSVVLNSSSESEGGCLDLSLEALDHESTPEMYKELLENEKKNFHLVRSAARDLGGIPAMIHHSDMSNTIPDEKVVITYLSFLCARLLDLRKEIRAARLIQTTWRKYKLKRDLKHHQERDKAARVIQSVVLNFLSRRRLQKNVSAALVIQKCWRRVSAQRKLRMLKNEKLAKLQNKSAVLIQAYWRRYSTRKRFLRLKHYSVILQSRIRMKIALTSYKRYLWATVTIQRHWRAYLSRKRDQQIFRKLKSSSLVIQFMFRRWKRRKLQLQTKAAVTLQRAFREWHLRKQIRERSAVVIQSWYRMHRELQKYIYIRSCVIVIQRRVRCFQAQKLYKRRKDAILTLQKHYRARQKGKLAHADYLQKRAATIRLQAAFRGMKARHSYRLQIGAACVLQSYWRMRQERVRFLNLKKMVIKLQAHIRKYQQLQKYKKIKKAAITIQTHFRASISARRVLASYQKTRSSVIVLQSACRGMQARKAFRHALASVIKIQSYYRAYICRKTFQNFKNATIKLQSIVKMKQSRKQYLQIRAAALFIQRWYRSQKLASQKRKEYIQVRESCIKLQSHFRGCLVRKQLRLQCKAAISLQSYFRMRTARQRYLKMCKAALVIQSFYCAYRAQISQRKNFLQVKRAAICLQAAYRGCKVRRQIKQQSTAAVTIQRVFRGHSQRMKYQTMLQSAVKIQRWYRAQKVAYDMRIQFLKTREAVVCLQSAYRGWQVRQQLRRQHEAAVKIQSTFRMAVAQQQYKLLRAAAAVIQQHVRARAAGKRQHLAYIQLRHAALVFQAAWKGKMLRRQIARQHQCAALIQSYYRMHIQRRKWSIMKTAALQIQLCYRAYKVGKEQRHLYLKTKAAVVTLQSAYRGMKVRKRVAECHKAAVTIQSKFRAYRTQKKYTTYRTSAIVIQRWYRNIKITTQQHQEYLNLRRAAVQVQAAYRGIRVRRRIQHMHMAATLIEAMFKMRQSRVRYLKMRTAALIIQVRYRAYYLGKIQHEKYLRTLKAIKTLQAGVRGARVRRTVRKMHFAATLIQSHFRGHRQQTYFHRLRKAATMVQQRYRAVKEGSAEFQRYSRLRRSVLLIQAAFRGLRTRRHLKAMHLAATLIQRRFRTFAMRRKFLSLRKTAIWIQRQYRARLYAKYSRQQLLLEKAVIKIQSSYRGWVVRKRVQKMHRAATVIQATFRMHGAYMRYQHLKRASVVIQVHTAAELQRQKHAAVILQAAVRGMKTRSHLKTMHSSATLIQSQFRAFIVRRRFIALRKAAIFVQRKFRATLYAKHKLHQFLQLRKAAITIQSSYRRLMVQKKLQEMHRAAALIQATFRMHRTYVAFHIWKCASIRIQQCYRTYRTIKLQKEKLIREEQHSAAVLIQSTYRMYRQRCFYQQRRWAAKVIQKTYRANKRRQDLLYVCKEETPLLQMHFQGLNTAKQGRQQHGAAMITQKHFRAFKARRLMEAERGFQAGCRKYKAKKYLSKVEAACRIQAWYRRWRAHKKYLTLLKAVNIIEGYLSAQLARRRFLKMRAAAIIIQRKWRATLSVRGARENLKRHRAACVIQAHFRGYQARQSFLQQRSAVLIIQRHVRAMVAAKQERIKYIKLKKSTVVVQALVRGWLVRKRVSEQKAKTRLFHFTAAAYCHMCALKIQRAYRLHVTLRNAKKHMDSVIFIQRWFRKRLQRKRFIEQYHKILSTRREAHACWLQQDRAASVIQKAVRRFLLCRRQEKITSCATRIQALWRGYSWRKKNDHTEIKAIRRSLRAVSTTVEEENKLYRRTERALHHLLTYKHLSAILDALKHLEVVTRLSPLCCENMAESGAVSTIFVVIRSCNRSVPCMEVVGYAVQVLLNVAKYDKTIAAVYEAENCVDTLLELLQVYREKPGDRVAEKSASIFTRTCCLLAVLLKTEQCAFDAQSRSKVTDRIYRLYKFTVPKHKVNTQGLFDKQKQNSCVGFPCIPERTMKTRLVSRLKPQWVLRRDNVEEITNSLQAIQLVMDTLGISY.

2 disordered regions span residues 1 to 26 (MATMQAASCPEERGRRARPDPEAGDP) and 139 to 169 (KRSLWNTSKKIPASSKHTKRTSKNQHFNESF). The segment covering 10–21 (PEERGRRARPDP) has biased composition (basic and acidic residues). A sufficient for interaction with KATNA1:KATNB1 region spans residues 289–388 (STQTQIHFLS…KDSMGHVGQQ (100 aa)). 3 positions are modified to phosphoserine: S348, S373, and S573. Residues 579-600 (PSTVARTTKKEGHTSKRISSLE) are disordered. Residues 888 to 1024 (KASKELLLAF…LLWKIALAFQ (137 aa)) enclose the Calponin-homology (CH) 1 domain. A coiled-coil region spans residues 1025 to 1045 (VDISLNLDQLKEEIDFLKHTH). S1071 bears the Phosphoserine mark. The 152-residue stretch at 1078-1229 (GDSVQLLMDW…YLSFLCARLL (152 aa)) folds into the Calponin-homology (CH) 2 domain. IQ domains are found at residues 1234–1263 (EIRAARLIQTTWRKYKLKRDLKHHQERDKA), 1315–1346 (QNKSAVLIQAYWRRYSTRKRFLRLKHYSVILQ), 1410–1439 (QTKAAVTLQRAFREWHLRKQIRERSAVVIQ), 1504–1535 (KRAATIRLQAAFRGMKARHSYRLQIGAACVLQ), 1550–1579 (LKKMVIKLQAHIRKYQQLQKYKKIKKAAIT), 1600–1629 (TRSSVIVLQSACRGMQARKAFRHALASVIK), 1623–1652 (ALASVIKIQSYYRAYICRKTFQNFKNATIK), 1696–1725 (VRESCIKLQSHFRGCLVRKQLRLQCKAAIS), 1719–1750 (QCKAAISLQSYFRMRTARQRYLKMCKAALVIQ), 1769–1798 (VKRAAICLQAAYRGCKVRRQIKQQSTAAVT), 1792–1821 (QSTAAVTIQRVFRGHSQRMKYQTMLQSAVK), 1842–1871 (TREAVVCLQSAYRGWQVRQQLRRQHEAAVK), 1865–1896 (QHEAAVKIQSTFRMAVAQQQYKLLRAAAAVIQ), 1915–1946 (LRHAALVFQAAWKGKMLRRQIARQHQCAALIQ), 1938–1967 (QHQCAALIQSYYRMHIQRRKWSIMKTAALQ), 1988–2017 (TKAAVVTLQSAYRGMKVRKRVAECHKAAVT), 2011–2042 (CHKAAVTIQSKFRAYRTQKKYTTYRTSAIVIQ), 2061–2092 (LRRAAVQVQAAYRGIRVRRRIQHMHMAATLIE), 2134–2165 (TLKAIKTLQAGVRGARVRRTVRKMHFAATLIQ), 2157–2188 (MHFAATLIQSHFRGHRQQTYFHRLRKAATMVQ), 2207–2238 (LRRSVLLIQAAFRGLRTRRHLKAMHLAATLIQ), 2230–2261 (MHLAATLIQRRFRTFAMRRKFLSLRKTAIWIQ), 2279–2310 (LEKAVIKIQSSYRGWVVRKRVQKMHRAATVIQ), 2302–2333 (MHRAATVIQATFRMHGAYMRYQHLKRASVVIQ), 2343–2374 (QKHAAVILQAAVRGMKTRSHLKTMHSSATLIQ), 2366–2397 (MHSSATLIQSQFRAFIVRRRFIALRKAAIFVQ), 2416–2447 (LRKAAITIQSSYRRLMVQKKLQEMHRAAALIQ), 2491–2522 (QHSAAVLIQSTYRMYRQRCFYQQRRWAAKVIQ), 2602–2633 (KVEAACRIQAWYRRWRAHKKYLTLLKAVNIIE), 2674–2705 (RHRAACVIQAHFRGYQARQSFLQQRSAVLIIQ), 2724–2755 (LKKSTVVVQALVRGWLVRKRVSEQKAKTRLFH), and 2849–2880 (ITSCATRIQALWRGYSWRKKNDHTEIKAIRRS).

As to quaternary structure, interacts with KATNA1 and KATNB1; katanin complex formation KATNA1:KATNB1 is required for the association. As to expression, expressed in fetal brain, peripheral nervous system, liver and spleen. In the adult, expressed exclusively in testis, ovary and spleen.

It localises to the cytoplasm. It is found in the cytoskeleton. Its subcellular location is the spindle. The protein localises to the nucleus. Functionally, involved in mitotic spindle regulation and coordination of mitotic processes. The function in regulating microtubule dynamics at spindle poles including spindle orientation, astral microtubule density and poleward microtubule flux seem to depend on its association with the katanin complex formed by KATNA1 and KATNB1. Enhances the microtubule lattice severing activity of KATNA1 by recruiting the katanin complex to microtubules. Can block microtubule minus-end growth and reversely this function can be enhanced by the katanin complex. May have a preferential role in regulating neurogenesis. In Mus musculus (Mouse), this protein is Abnormal spindle-like microcephaly-associated protein homolog (Aspm).